Here is a 78-residue protein sequence, read N- to C-terminus: Large ribosomal subunit protein eL20 (78 aa).

The protein belongs to the eukaryotic ribosomal protein eL20 family. In terms of assembly, part of the 50S ribosomal subunit. Binds 23S rRNA.

This chain is Large ribosomal subunit protein eL20, found in Pyrobaculum islandicum (strain DSM 4184 / JCM 9189 / GEO3).